Reading from the N-terminus, the 730-residue chain is Elongation factor 2 (730 aa).

The tr-type G domain occupies 19–228 (QRIRNIGIVA…TGVSFKDVYD (210 aa)). GTP is bound by residues 28–35 (AHIDHGKT), 94–98 (DTPGH), and 148–151 (NKVD). His-596 carries the post-translational modification Diphthamide.

Belongs to the TRAFAC class translation factor GTPase superfamily. Classic translation factor GTPase family. EF-G/EF-2 subfamily.

It localises to the cytoplasm. Its function is as follows. Catalyzes the GTP-dependent ribosomal translocation step during translation elongation. During this step, the ribosome changes from the pre-translocational (PRE) to the post-translocational (POST) state as the newly formed A-site-bound peptidyl-tRNA and P-site-bound deacylated tRNA move to the P and E sites, respectively. Catalyzes the coordinated movement of the two tRNA molecules, the mRNA and conformational changes in the ribosome. This chain is Elongation factor 2, found in Methanosarcina acetivorans (strain ATCC 35395 / DSM 2834 / JCM 12185 / C2A).